A 353-amino-acid polypeptide reads, in one-letter code: Cellulose-complementing protein (353 aa).

Disordered regions lie at residues 1–21 (MSAS…PQDF), 75–94 (PQIA…PAIV), and 117–337 (AVPA…SPRP). Pro residues predominate over residues 80–91 (APPPPPVVPDPP). Composition is skewed to low complexity over residues 117-132 (AVPA…VQAA) and 142-164 (IAEQ…VAAA). Residues 165–175 (PVPPDPAPVTP) show a composition bias toward pro residues. Polar residues-rich tracts occupy residues 196–226 (QVRT…SSIS) and 278–304 (STRS…QASR).

The sequence is that of Cellulose-complementing protein (ccpAX) from Komagataeibacter xylinus (Gluconacetobacter xylinus).